The following is a 317-amino-acid chain: Tumor-associated calcium signal transducer 2 (317 aa).

The N-terminal stretch at 1–24 (MARGLDLAPLLLLLLAMATRFCTA) is a signal peptide. At 25-270 (QSNCTCPTNK…QFSMKRLTAG (246 aa)) the chain is on the extracellular side. N-linked (GlcNAc...) asparagine glycosylation is present at Asn-27. The Thyroglobulin type-1 domain maps to 64 to 139 (TSKCLLLKAR…TDKGDQSLRC (76 aa)). Intrachain disulfides connect Cys-67–Cys-102, Cys-113–Cys-119, and Cys-121–Cys-139. Asn-114 is a glycosylation site (N-linked (GlcNAc...) asparagine). Asn-162 and Asn-202 each carry an N-linked (GlcNAc...) asparagine glycan. Residues 271 to 291 (VIAVIAVVSVAVVAGVVVLVV) traverse the membrane as a helical segment. The Cytoplasmic segment spans residues 292–317 (TKRRKSGKYKKVELKELGEMRSEPSL).

The protein belongs to the EPCAM family. In terms of tissue distribution, expressed in kidney, lung, ovary and testis. High levels of expression in immortalized keratinocytes.

The protein resides in the membrane. May function as a growth factor receptor. In Mus musculus (Mouse), this protein is Tumor-associated calcium signal transducer 2 (Tacstd2).